The chain runs to 111 residues: 2Fe-2S ferredoxin (111 aa).

One can recognise a 2Fe-2S ferredoxin-type domain in the interval 1 to 104 (MPKIFFLPHK…DIEVQIPLYN (104 aa)). The [2Fe-2S] cluster site is built by Cys42, Cys48, Cys51, and Cys87.

This sequence belongs to the adrenodoxin/putidaredoxin family. It depends on [2Fe-2S] cluster as a cofactor.

In terms of biological role, ferredoxin are iron-sulfur proteins that transfer electrons in a wide variety of metabolic reactions. In Buchnera aphidicola subsp. Schizaphis graminum (strain Sg), this protein is 2Fe-2S ferredoxin (fdx).